We begin with the raw amino-acid sequence, 135 residues long: Small ribosomal subunit protein uS12 (135 aa).

Asp-89 is subject to 3-methylthioaspartic acid. The interval 106–135 (GVKDRKQGRSKYGAKRPKPGQAPAAAGKKK) is disordered. Residues 113–123 (GRSKYGAKRPK) show a composition bias toward basic residues. Low complexity predominate over residues 124–135 (PGQAPAAAGKKK).

This sequence belongs to the universal ribosomal protein uS12 family. As to quaternary structure, part of the 30S ribosomal subunit. Contacts proteins S8 and S17. May interact with IF1 in the 30S initiation complex.

Functionally, with S4 and S5 plays an important role in translational accuracy. In terms of biological role, interacts with and stabilizes bases of the 16S rRNA that are involved in tRNA selection in the A site and with the mRNA backbone. Located at the interface of the 30S and 50S subunits, it traverses the body of the 30S subunit contacting proteins on the other side and probably holding the rRNA structure together. The combined cluster of proteins S8, S12 and S17 appears to hold together the shoulder and platform of the 30S subunit. The chain is Small ribosomal subunit protein uS12 from Synechococcus sp. (strain JA-3-3Ab) (Cyanobacteria bacterium Yellowstone A-Prime).